Here is a 236-residue protein sequence, read N- to C-terminus: Glucosamine-6-phosphate deaminase (236 aa).

Asp-62 functions as the Proton acceptor; for enolization step in the catalytic mechanism. The active-site For ring-opening step is Asn-128. The Proton acceptor; for ring-opening step role is filled by His-130. Residue Glu-135 is the For ring-opening step of the active site.

It belongs to the glucosamine/galactosamine-6-phosphate isomerase family. NagB subfamily.

It catalyses the reaction alpha-D-glucosamine 6-phosphate + H2O = beta-D-fructose 6-phosphate + NH4(+). It functions in the pathway amino-sugar metabolism; N-acetylneuraminate degradation; D-fructose 6-phosphate from N-acetylneuraminate: step 5/5. Its function is as follows. Catalyzes the reversible isomerization-deamination of glucosamine 6-phosphate (GlcN6P) to form fructose 6-phosphate (Fru6P) and ammonium ion. This chain is Glucosamine-6-phosphate deaminase, found in Pediococcus pentosaceus (strain ATCC 25745 / CCUG 21536 / LMG 10740 / 183-1w).